The sequence spans 365 residues: Holliday junction branch migration complex subunit RuvB (365 aa).

Residues 1–191 form a large ATPase domain (RuvB-L) region; the sequence is MSPELGGGYD…FGFTAHMDFY (191 aa). Residues L30, R31, G72, K75, T76, S77, 138 to 140, R181, Y191, and R228 contribute to the ATP site; that span reads EDF. T76 is a binding site for Mg(2+). Residues 192–262 are small ATPAse domain (RuvB-S); that stretch reads EPAELKQILM…IAHAALAVYD (71 aa). Residues 265–365 are head domain (RuvB-H); that stretch reads QLGLDRLDRS…QASLFDPEDP (101 aa). R320 and R325 together coordinate DNA.

It belongs to the RuvB family. In terms of assembly, homohexamer. Forms an RuvA(8)-RuvB(12)-Holliday junction (HJ) complex. HJ DNA is sandwiched between 2 RuvA tetramers; dsDNA enters through RuvA and exits via RuvB. An RuvB hexamer assembles on each DNA strand where it exits the tetramer. Each RuvB hexamer is contacted by two RuvA subunits (via domain III) on 2 adjacent RuvB subunits; this complex drives branch migration. In the full resolvosome a probable DNA-RuvA(4)-RuvB(12)-RuvC(2) complex forms which resolves the HJ.

It localises to the cytoplasm. The enzyme catalyses ATP + H2O = ADP + phosphate + H(+). Functionally, the RuvA-RuvB-RuvC complex processes Holliday junction (HJ) DNA during genetic recombination and DNA repair, while the RuvA-RuvB complex plays an important role in the rescue of blocked DNA replication forks via replication fork reversal (RFR). RuvA specifically binds to HJ cruciform DNA, conferring on it an open structure. The RuvB hexamer acts as an ATP-dependent pump, pulling dsDNA into and through the RuvAB complex. RuvB forms 2 homohexamers on either side of HJ DNA bound by 1 or 2 RuvA tetramers; 4 subunits per hexamer contact DNA at a time. Coordinated motions by a converter formed by DNA-disengaged RuvB subunits stimulates ATP hydrolysis and nucleotide exchange. Immobilization of the converter enables RuvB to convert the ATP-contained energy into a lever motion, pulling 2 nucleotides of DNA out of the RuvA tetramer per ATP hydrolyzed, thus driving DNA branch migration. The RuvB motors rotate together with the DNA substrate, which together with the progressing nucleotide cycle form the mechanistic basis for DNA recombination by continuous HJ branch migration. Branch migration allows RuvC to scan DNA until it finds its consensus sequence, where it cleaves and resolves cruciform DNA. This is Holliday junction branch migration complex subunit RuvB from Rhodococcus opacus (strain B4).